Consider the following 158-residue polypeptide: UPF0225 protein Pput_1155 (158 aa).

The protein belongs to the UPF0225 family.

This Pseudomonas putida (strain ATCC 700007 / DSM 6899 / JCM 31910 / BCRC 17059 / LMG 24140 / F1) protein is UPF0225 protein Pput_1155.